The chain runs to 606 residues: Pickpocket protein 28 (606 aa).

A disordered region spans residues M1–D26. A run of 2 helical transmembrane segments spans residues I66–V86 and G490–I510.

This sequence belongs to the amiloride-sensitive sodium channel (TC 1.A.6) family. As to expression, expressed in water-sensing neurons in taste bristles on the proboscis but not in carbonation-sensing taste peg neurons (at protein level). Expressed in the tracheal system.

It is found in the cell membrane. Osmosensitive ion channel that mediates the cellular and behavioral response to water. Plays an essential role in gustatory water reception. Part of a complex that plays a role in tracheal liquid clearance. Probable role in sodium transport. In Drosophila melanogaster (Fruit fly), this protein is Pickpocket protein 28 (ppk28).